The primary structure comprises 293 residues: Movement protein BC1 (293 aa).

It belongs to the begomovirus movement protein BC1 family. Binds to dimeric supercoiled plasmid DNA. Phosphorylated.

It localises to the host cell membrane. The protein localises to the host microsome membrane. The protein resides in the host endoplasmic reticulum membrane. In terms of biological role, transports viral genome to neighboring plant cells directly through plasmosdesmata, without any budding. The movement protein allows efficient cell to cell propagation, by bypassing the host cell wall barrier. Begomovirus genome is shuttled out of nucleus by Nuclear shuttle protein (NSP) and the movement protein transports the DNA-NSP complex to cell plasmodesmata and facilitates further movement across the cell wall. This is Movement protein BC1 from Macroptilium lathyroides (Lima bean).